The following is a 401-amino-acid chain: Voltage-gated potassium channel subunit beta-1 (401 aa).

The NADP(+) site is built by threonine 90, tryptophan 91, glutamine 97, and aspartate 119. The Proton donor/acceptor role is filled by tyrosine 124. Positions 192, 222, 223, 248, 277, 278, 279, 280, 281, 282, 288, 298, 357, 359, 363, 366, and 367 each coordinate NADP(+).

This sequence belongs to the shaker potassium channel beta subunit family. As to quaternary structure, homotetramer. Interaction with tetrameric potassium channel alpha subunits gives rise to a heterooctamer. Identified in potassium channel complexes containing KCNA1, KCNA2, KCNA4, KCNA5, KCNA6, KCNAB1 and KCNAB2. Part of a complex containing KCNA1, KCNA4 and LGI1; interaction with LGI1 inhibits down-regulation of KCNA1 channel activity. Interacts with the dimer formed by GNB1 and GNG2; this enhances KCNA1 binding. Interacts with SQSTM. Detected in brain, in hippocampus and striatum (at protein level). Predominantly expressed in brain. No expression found in heart, skeletal muscle or kidney. In the late embryonic and early neonatal brain, highly expressed in hippocampus, cerebral cortex, caudate putamen, colliculus and cerebellum.

The protein localises to the cytoplasm. It is found in the membrane. It localises to the cell membrane. The catalysed reaction is a primary alcohol + NADP(+) = an aldehyde + NADPH + H(+). The enzyme catalyses a secondary alcohol + NADP(+) = a ketone + NADPH + H(+). In terms of biological role, regulatory subunit of the voltage-gated potassium (Kv) Shaker channels composed of pore-forming and potassium-conducting alpha subunits and of regulatory beta subunits. The beta-1/KCNAB1 cytoplasmic subunit mediates closure of delayed rectifier potassium channels by physically obstructing the pore via its N-terminal domain and increases the speed of channel closure for other family members. Promotes the inactivation of KCNA1, KCNA2, KCNA4, KCNA5 and KCNA6 alpha subunit-containing channels. Displays nicotinamide adenine dinucleotide phosphate (NADPH)-dependent aldoketoreductase activity by catalyzing the NADPH-dependent reduction of a variety of endogenous aldehydes and ketones. The binding of NADPH is required for efficient down-regulation of potassium channel activity. Oxidation of the bound NADPH restrains N-terminal domain from blocking the channel, thereby decreasing N-type inactivation of potassium channel activity. The protein is Voltage-gated potassium channel subunit beta-1 of Mus musculus (Mouse).